Reading from the N-terminus, the 2201-residue chain is Voltage-dependent T-type calcium channel subunit alpha-1I (2201 aa).

Residues 1-45 form a disordered region; it reads MADSNLPPSSAAAPAPEPGITEQPGPRSPPPSPPGLEEPLEGTNP. Over 1-76 the chain is Cytoplasmic; the sequence is MADSNLPPSS…RNWCIKMVCN (76 aa). Over residues 26–36 the composition is skewed to pro residues; it reads PRSPPPSPPGL. The I repeat unit spans residues 64-399; sequence TSPRNWCIKM…LCLVVIATQF (336 aa). The helical transmembrane segment at 77–97 threads the bilayer; it reads PWFECVSMLVILLNCVTLGMY. Over 98–115 the chain is Extracellular; it reads QPCDDMECLSDRCKILQV. The chain crosses the membrane as a helical span at residues 116–137; sequence FDDFIFIFFAMEMVLKMVALGI. Residues 138–146 are Cytoplasmic-facing; that stretch reads FGKKCYLGD. Residues 147-166 traverse the membrane as a helical segment; sequence TWNRLDFFIVMAGMVEYSLD. Residues 167 to 171 lie on the Extracellular side of the membrane; that stretch reads LQNIN. Asn-171 carries N-linked (GlcNAc...) asparagine glycosylation. The chain crosses the membrane as a helical span at residues 172–189; it reads LSAIRTVRVLRPLKAINR. The Cytoplasmic segment spans residues 190 to 209; it reads VPSMRILVNLLLDTLPMLGN. Residues 210–230 form a helical membrane-spanning segment; sequence VLLLCFFVFFIFGIIGVQLWA. The Extracellular segment spans residues 231-371; sequence GLLRNRCFLE…YYVMDAHSFY (141 aa). Asn-242 and Asn-309 each carry an N-linked (GlcNAc...) asparagine glycan. A helical transmembrane segment spans residues 372 to 396; the sequence is NFIYFILLIIVGSFFMINLCLVVIA. The Cytoplasmic segment spans residues 397 to 598; it reads TQFSETKQRE…EKLRGIVDSK (202 aa). 2 disordered regions span residues 463–500 and 513–579; these read QAMG…TPHT and PSSC…AARL. Positions 545–554 are enriched in low complexity; that stretch reads SAEAEANGDG. Residues 584–823 form an II repeat; it reads WRETREKLRG…LLVAILVEGF (240 aa). The chain crosses the membrane as a helical span at residues 599-619; the sequence is YFNRGIMMAILVNTVSMGIEH. The Extracellular segment spans residues 620–632; that stretch reads HEQPEELTNILEI. Residues 633–654 form a helical membrane-spanning segment; that stretch reads CNVVFTSMFALEMILKLAAFGL. Residues 655–660 lie on the Cytoplasmic side of the membrane; it reads FDYLRN. The helical transmembrane segment at 661–679 threads the bilayer; that stretch reads PYNIFDSIIVIISIWEIVG. Residues 680–687 lie on the Extracellular side of the membrane; sequence QADGGLSV. The chain crosses the membrane as a helical span at residues 688-711; that stretch reads LRTFRLLRVLKLVRFMPALRRQLV. The Cytoplasmic segment spans residues 712-722; sequence VLMKTMDNVAT. Residues 723–743 form a helical membrane-spanning segment; the sequence is FCMLLMLFIFIFSILGMHIFG. Residues 744-795 lie on the Extracellular side of the membrane; that stretch reads CKFSLRTDTGDTVPDRKNFDSLLWAIVTVFQILTQEDWNVVLYNGMASTTPW. A helical membrane pass occupies residues 796–820; it reads ASLYFVALMTFGNYVLFNLLVAILV. The Cytoplasmic portion of the chain corresponds to 821–1125; it reads EGFQAEGDAN…NKFRILCQTI (305 aa). The interval 936–969 is disordered; sequence WGRSGTWASRRSSWNSLKHKPPSAEHESLLSGEG. Residues 941-951 are compositionally biased toward polar residues; sequence TWASRRSSWNS. Ser-1017 bears the Phosphoserine mark. Residues 1116–1393 form an III repeat; that stretch reads NKFRILCQTI…MFVGVVVENF (278 aa). Residues 1126–1148 traverse the membrane as a helical segment; that stretch reads IAHKLFDYVVLAFIFLNCITIAL. At 1149 to 1166 the chain is on the extracellular side; the sequence is ERPQIEAGSTERIFLTVS. Residues 1167–1187 form a helical membrane-spanning segment; it reads NYIFTAIFVGEMTLKVVSLGL. At 1188-1197 the chain is on the cytoplasmic side; sequence YFGEQAYLRS. The chain crosses the membrane as a helical span at residues 1198–1217; that stretch reads SWNVLDGFLVFVSIIDIVVS. The Extracellular segment spans residues 1218 to 1231; it reads VASAGGAKILGVLR. A helical transmembrane segment spans residues 1232–1253; it reads VLRLLRTLRPLRVISRAPGLKL. Over 1254-1263 the chain is Cytoplasmic; it reads VVETLISSLK. The helical transmembrane segment at 1264–1287 threads the bilayer; sequence PIGNIVLICCAFFIIFGILGVQLF. Topologically, residues 1288–1364 are extracellular; sequence KGKFYHCLGV…DQQPVTNHNP (77 aa). Residues Asn-1301 and Asn-1304 are each glycosylated (N-linked (GlcNAc...) asparagine). A helical transmembrane segment spans residues 1365–1390; that stretch reads WMLLYFISFLLIVSFFVLNMFVGVVV. Residues 1391–1445 are Cytoplasmic-facing; sequence ENFHKCRQHQEAEEARRREEKRLRRLEKKRRKAQRLPYYATYCPTRLLIHSMCTS. The IV repeat unit spans residues 1431-1692; the sequence is TYCPTRLLIH…VVVAVLMKHL (262 aa). A helical membrane pass occupies residues 1446-1466; that stretch reads HYLDIFITFIICLNVVTMSLE. Residues 1467–1480 are Extracellular-facing; it reads HYNQPTSLETALKY. Residues 1481-1502 form a helical membrane-spanning segment; that stretch reads CNYMFTTVFVLEAVLKLVAFGL. The Cytoplasmic portion of the chain corresponds to 1503–1509; it reads RRFFKDR. A helical membrane pass occupies residues 1510 to 1528; it reads WNQLDLAIVLLSVMGITLE. Residues 1529 to 1542 are Extracellular-facing; that stretch reads EIEINAALPINPTI. A helical transmembrane segment spans residues 1543–1566; sequence IRIMRVLRIARVLKLLKMATGMRA. At 1567–1580 the chain is on the cytoplasmic side; the sequence is LLDTVVQALPQVGN. A helical membrane pass occupies residues 1581–1601; the sequence is LGLLFMLLFFIYAALGVELFG. The Extracellular segment spans residues 1602-1664; the sequence is KLVCNDENPC…RSCLSSLQFV (63 aa). The chain crosses the membrane as a helical span at residues 1665–1692; the sequence is SPLYFVSFVLTAQFVLINVVVAVLMKHL. Residues 1693-1835 are Cytoplasmic-facing; it reads DDSNKEAQED…EVQLAETEAF (143 aa). Disordered regions lie at residues 1846–1876, 1916–1938, 1992–2045, 2057–2105, and 2126–2201; these read LLGD…PEPM, LKHD…PLLQ, SDTS…TRRR, RGLR…HSET, and LTPA…KRKR. Positions 1992 to 2007 are enriched in low complexity; sequence SDTSLDASPSSSAGSL. 2 stretches are compositionally biased toward polar residues: residues 2008 to 2019 and 2066 to 2075; these read QTTLEDSLTLSD and HSSGGSTSPG. The segment covering 2077–2090 has biased composition (basic and acidic residues); the sequence is THHDSMDPSDEEGR.

Belongs to the calcium channel alpha-1 subunit (TC 1.A.1.11) family. CACNA1I subfamily. As to quaternary structure, interacts with CATSPER1 and CATSPER2, leading to suppress T-type calcium channel activity. Post-translationally, in response to raising of intracellular calcium, the T-type channels are activated by CaM-kinase II. Brain.

It is found in the membrane. It carries out the reaction Ca(2+)(in) = Ca(2+)(out). Voltage-sensitive calcium channels (VSCC) mediate the entry of calcium ions into excitable cells and are also involved in a variety of calcium-dependent processes, including muscle contraction, hormone or neurotransmitter release, gene expression, cell motility, cell division and cell death. This channel gives rise to T-type calcium currents. T-type calcium channels belong to the 'low-voltage activated (LVA)' group and are strongly blocked by nickel and mibefradil. A particularity of this type of channels is an opening at quite negative potentials, and a voltage-dependent inactivation. T-type channels serve pacemaking functions in both central neurons and cardiac nodal cells and support calcium signaling in secretory cells and vascular smooth muscle. They may also be involved in the modulation of firing patterns of neurons which is important for information processing as well as in cell growth processes. Gates in voltage ranges similar to, but higher than alpha 1G or alpha 1H. In terms of biological role, voltage-sensitive calcium channels (VSCC) mediate the entry of calcium ions into excitable cells and are also involved in a variety of calcium-dependent processes, including muscle contraction, hormone or neurotransmitter release, gene expression, cell motility, cell division and cell death. This channel gives rise to T-type calcium currents. This is Voltage-dependent T-type calcium channel subunit alpha-1I (Cacna1i) from Rattus norvegicus (Rat).